The primary structure comprises 267 residues: S-adenosylmethionine decarboxylase proenzyme (267 aa).

Residue Ser114 is the Schiff-base intermediate with substrate; via pyruvic acid of the active site. Ser114 is modified (pyruvic acid (Ser); by autocatalysis). His119 (proton acceptor; for processing activity) is an active-site residue. Cys142 (proton donor; for catalytic activity) is an active-site residue.

It belongs to the prokaryotic AdoMetDC family. Type 2 subfamily. Heterooctamer of four alpha and four beta chains arranged as a tetramer of alpha/beta heterodimers. Requires pyruvate as cofactor. Is synthesized initially as an inactive proenzyme. Formation of the active enzyme involves a self-maturation process in which the active site pyruvoyl group is generated from an internal serine residue via an autocatalytic post-translational modification. Two non-identical subunits are generated from the proenzyme in this reaction, and the pyruvate is formed at the N-terminus of the alpha chain, which is derived from the carboxyl end of the proenzyme. The post-translation cleavage follows an unusual pathway, termed non-hydrolytic serinolysis, in which the side chain hydroxyl group of the serine supplies its oxygen atom to form the C-terminus of the beta chain, while the remainder of the serine residue undergoes an oxidative deamination to produce ammonia and the pyruvoyl group blocking the N-terminus of the alpha chain.

It catalyses the reaction S-adenosyl-L-methionine + H(+) = S-adenosyl 3-(methylsulfanyl)propylamine + CO2. It participates in amine and polyamine biosynthesis; S-adenosylmethioninamine biosynthesis; S-adenosylmethioninamine from S-adenosyl-L-methionine: step 1/1. Functionally, catalyzes the decarboxylation of S-adenosylmethionine to S-adenosylmethioninamine (dcAdoMet), the propylamine donor required for the synthesis of the polyamines spermine and spermidine from the diamine putrescine. The chain is S-adenosylmethionine decarboxylase proenzyme from Erwinia tasmaniensis (strain DSM 17950 / CFBP 7177 / CIP 109463 / NCPPB 4357 / Et1/99).